A 38-amino-acid chain; its full sequence is MKVRPSVKKMCEHCKVVRRKGRVMIICSANPKHKQRQG.

It belongs to the bacterial ribosomal protein bL36 family.

The protein is Large ribosomal subunit protein bL36 of Lacticaseibacillus casei (strain BL23) (Lactobacillus casei).